Consider the following 263-residue polypeptide: Neurovirulence factor ICP34.5 (263 aa).

Residues 1–14 (MARRRRHRGPRRPR) show a composition bias toward basic residues. The segment at 1–16 (MARRRRHRGPRRPRPP) is required for nucleolar localization. Disordered stretches follow at residues 1 to 128 (MARR…PFRL) and 149 to 190 (RRAG…PATP). Residues 24 to 35 (TAQSQVTSTPNS) are compositionally biased toward polar residues. Residues 45–58 (AAPPPPPASGPPPS) show a composition bias toward pro residues. Over residues 73–83 (ASDDDDDDDWP) the composition is skewed to acidic residues. Pro residues-rich tracts occupy residues 84–93 (DSPPPEPAPE) and 119–128 (SHPPSRPFRL). Positions 128–137 (LPPRLALRLR) match the Nuclear export signal motif. 10 consecutive repeat copies span residues 161-163 (ATP), 164-166 (ATP), 167-169 (ATP), 170-172 (ATP), 173-175 (ATP), 176-178 (ATP), 179-181 (ATP), 182-184 (ATP), 185-187 (ATP), and 188-190 (ATP). Residues 161–190 (ATPATPATPATPATPATPATPATPATPATP) are 10 X 3 AA tandem repeats of A-T-P. Residues 164–190 (ATPATPATPATPATPATPATPATPATP) show a composition bias toward low complexity. Residues 190 to 203 (PARVRFSPHVRVRH) form an interaction with host PPP1CA region. The segment at 205-263 (VVWASAARLARRGSWARERADRARFRRRVAEAEAVIGPCLGPEARARALARGAGPANSV) is important for interferon resistance. Residues 215-233 (RRGSWARERADRARFRRRV) carry the Bipartite nuclear localization signal motif. The tract at residues 233-248 (VAEAEAVIGPCLGPEA) is interaction with host EIF2S1/EIF-2ALPHA.

This sequence belongs to the PPP1R15 family. In terms of assembly, interacts with host PPP1CA; this interaction to forms a high-molecular-weight complex that dephosphorylates EIF2S1/eIF-2alpha. Interacts with host EIF2S1/eIF-2alpha; this interaction is crucial for the specific dephosphorylation of EIF2S1/eIF-2alpha by PPP1CA. Binds to proliferating cell nuclear antigen (PCNA), which may release host cells from growth arrest and facilitate viral replication. Interacts (via N-terminus) with host C1QBP; this interaction allows C1QBP to be recruited to the inner nuclear membrane by ICP34.5. Interacts with host PRKCA. Interacts with protein UL31. Interacts with host STING/TMEM173; this interaction inhibits the intracellular DNA sensing pathway. Interacts with host BECN1; this interaction modulates host autophagy.

It localises to the host cytoplasm. It is found in the host nucleus. The protein localises to the host nucleolus. Its subcellular location is the virion. Functionally, inhibits the establishment of the immune response and of the integrated stress response (ISR) in the infected cell. Plays essential roles in viral nuclear egress to mediate capsid transit across the nuclear membrane. Facilitates nuclear egress cooperatively with host C1QBP and protein kinase C/PKC to induce lamin A/C phosphorylation and subsequent reorganization. In turn, lamina disassembles and nuclear egress occurs. Recruits the serine/threonine protein phosphatase PPP1CA/PP1-alpha to dephosphorylate the translation initiation factor EIF2S1/eIF-2alpha, thereby couteracting the host shutoff of protein synthesis involving double-stranded RNA-dependent protein kinase EIF2AK2/PKR. In turn, controls host IRF3 activation and subsequently inhibits host interferon response. Controls the DNA sensing pathway by interacting with and inhibiting host STING/TMEM173. Also down-modulates the host MHC class II proteins cell surface expression. Acts as a neurovirulence factor that has a profound effect on the growth of the virus in central nervous system tissue, by interacting with host BECN1 and thereby antagonizing the host autophagy response. This Human herpesvirus 1 (strain F) (HHV-1) protein is Neurovirulence factor ICP34.5 (RL1).